A 414-amino-acid polypeptide reads, in one-letter code: WW domain-containing oxidoreductase (414 aa).

A disordered region spans residues 1-24 (MAALRYAGLDDTDSEDELPPGWEE). A Phosphothreonine modification is found at Thr-12. Position 14 is a phosphoserine (Ser-14). The region spanning 16–49 (DELPPGWEERTTKDGWVYYANHTEEKTQWEHPKT) is the WW 1 domain. Position 33 is a phosphotyrosine (Tyr-33). The Nuclear localization signal motif lies at 50 to 55 (GKRKRV). The 34-residue stretch at 57–90 (GDLPYGWEQGTDENGQVFFVDHINKRTTYLDPRL) folds into the WW 2 domain. Positions 125–414 (KVVVVTGANS…IQERLGSQSG (290 aa)) are interaction with MAPT. 131-137 (GANSGIG) lines the NADP(+) pocket. Positions 209–273 (CNAATFALPW…RFTDINDSLG (65 aa)) are mediates targeting to the mitochondria. Ser-260 contributes to the substrate binding site. At Tyr-287 the chain carries Phosphotyrosine; by TNK2. Tyr-293 functions as the Proton acceptor in the catalytic mechanism.

This sequence belongs to the short-chain dehydrogenases/reductases (SDR) family. As to quaternary structure, interacts with TP53, p73/TP73 and MAPK8. Interacts with MAPT/TAU, RUNX2 and HYAL2. Forms a ternary complex with TP53 and MDM2. Interacts with ERBB4, LITAF and WBP1. Interacts with DVL1, DVL2 and DVL3. May interact with FAM189B and SCOTIN. Interacts with TNK2. Interacts with TMEM207. Interacts (via WW domain) with VOPP1. In terms of processing, phosphorylated upon genotoxic stress. Phosphorylation of Tyr-33 regulates interaction with TP53, TP73 and MAPK8. May also regulate proapoptotic activity. Phosphorylation by TNK2 is associated with polyubiquitination and degradation. Post-translationally, ubiquitinated when phosphorylated by TNK2, leading to its degradation.

Its subcellular location is the cytoplasm. It localises to the nucleus. It is found in the mitochondrion. The protein resides in the golgi apparatus. The protein localises to the lysosome. In terms of biological role, putative oxidoreductase. Acts as a tumor suppressor and plays a role in apoptosis. May function synergistically with p53/TP53 to control genotoxic stress-induced cell death. Plays a role in TGFB1 signaling and TGFB1-mediated cell death. May also play a role in tumor necrosis factor (TNF)-mediated cell death. Required for normal bone development. Inhibits Wnt signaling, probably by sequestering DVL2 in the cytoplasm. In Pongo abelii (Sumatran orangutan), this protein is WW domain-containing oxidoreductase (WWOX).